The following is a 337-amino-acid chain: Biotin synthase (337 aa).

The Radical SAM core domain occupies 58 to 288 (AGSELLHACS…AHPHKIIKFA (231 aa)). [4Fe-4S] cluster is bound by residues Cys-76, Cys-80, and Cys-83. 3 residues coordinate [2Fe-2S] cluster: Cys-155, Cys-216, and Lys-286.

It belongs to the radical SAM superfamily. Biotin synthase family. As to quaternary structure, homodimer. [4Fe-4S] cluster serves as cofactor. [2Fe-2S] cluster is required as a cofactor.

It carries out the reaction (4R,5S)-dethiobiotin + (sulfur carrier)-SH + 2 reduced [2Fe-2S]-[ferredoxin] + 2 S-adenosyl-L-methionine = (sulfur carrier)-H + biotin + 2 5'-deoxyadenosine + 2 L-methionine + 2 oxidized [2Fe-2S]-[ferredoxin]. Its pathway is cofactor biosynthesis; biotin biosynthesis; biotin from 7,8-diaminononanoate: step 2/2. Functionally, catalyzes the conversion of dethiobiotin (DTB) to biotin by the insertion of a sulfur atom into dethiobiotin via a radical-based mechanism. The polypeptide is Biotin synthase (Pelodictyon phaeoclathratiforme (strain DSM 5477 / BU-1)).